The sequence spans 317 residues: Insulin-like growth factor-binding protein 2 (317 aa).

Residues 1–33 (MQPRLGGPALLLLPPLLLLLLLGAGGGDCGARA) form the signal peptide. Positions 35–126 (VLFRCPPCTP…VHGEGTCEKH (92 aa)) constitute an IGFBP N-terminal domain. Cystine bridges form between C39-C76, C42-C78, C50-C79, C68-C82, C90-C103, and C97-C123. Disordered regions lie at residues 126–146 (HGDAEYSASPEQVADNGEEHS) and 190–218 (QHRQMGKGGKHHLGLEEPKKLRPPPARTP). The Thyroglobulin type-1 domain maps to 216–298 (RTPCQQELDQ…APTIRGDPEC (83 aa)). 3 disulfide bridges follow: C219/C253, C264/C275, and C277/C298. Positions 293–295 (RGD) match the Cell attachment site motif.

In terms of assembly, interacts with IGF1. Interacts with IGF2. Interacts (via RGD motif) with integrin alpha5/ITGA5; this interaction induces cell migration, adhesion or apoptosis according to the context. Interacts with PTPRB; this interaction leads to PTPRB dimerization and inactivation. Post-translationally, cleaved by MMP9 leading to release of free IGF2 from IGFBP2-IGF2 complex, which contributes to enhance the motility and the growth of astrocytes. In terms of processing, O-glycosylated.

Its subcellular location is the secreted. Functionally, multifunctional protein that plays a critical role in regulating the availability of IGFs such as IGF1 and IGF2 to their receptors and thereby regulates IGF-mediated cellular processes including proliferation, differentiation, and apoptosis in a cell-type specific manner. Functions coordinately with receptor protein tyrosine phosphatase beta/PTPRB and the IGF1 receptor to regulate IGF1-mediated signaling by stimulating the phosphorylation of PTEN leading to its inactivation and AKT1 activation. Plays a positive role in cell migration via interaction with integrin alpha5/ITGA5 through an RGD motif. Additionally, interaction with ITGA5/ITGB1 enhances the adhesion of endothelial progenitor cells to endothelial cells. Upon mitochondrial damage, facilitates apoptosis with ITGA5 of podocytes, and then activates the phosphorylation of focal adhesion kinase (FAK)-mediated mitochondrial injury. The protein is Insulin-like growth factor-binding protein 2 (IGFBP2) of Bos taurus (Bovine).